Here is a 1257-residue protein sequence, read N- to C-terminus: MENSERAEEMQENYQRNGTAEEQPKLRKEAVGSIEIFRFADGLDITLMILGILASLVNGACLPLMPLVLGEMSDNLISGCLVQTNTTNYQNCTQSQEKLNEDMTLLTLYYVGIGVAALIFGYIQISLWIITAARQTKRIRKQFFHSVLAQDIGWFDSCDIGELNTRMTDDIDKISDGIGDKIALLFQNMSTFSIGLAVGLVKGWKLTLVTLSTSPLIMASAAACSRMVISLTSKELSAYSKAGAVAEEVLSSIRTVIAFRAQEKELQRYTQNLKDAKDFGIKRTIASKVSLGAVYFFMNGTYGLAFWYGTSLILNGEPGYTIGTVLAVFFSVIHSSYCIGAAVPHFETFAIARGAAFHIFQVIDKKPSIDNFSTAGYKPESIEGTVEFKNVSFNYPSRPSIKILKGLNLRIKSGETVALVGLNGSGKSTVVQLLQRLYDPDDGFIMVDENDIRALNVRHYRDHIGVVSQEPVLFGTTISNNIKYGRDDVTDEEMERAAREANAYDFIMEFPNKFNTLVGEKGAQMSGGQKQRIAIARALVRNPKILILDEATSALDSESKSAVQAALEKASKGRTTIVVAHRLSTIRSADLIVTLKDGMLAEKGAHAELMAKRGLYYSLVMSQDIKKADEQMESMTYSTERKTNSLPLHSVKSIKSDFIDKAEESTQSKEISLPEVSLLKILKLNKPEWPFVVLGTLASVLNGTVHPVFSIIFAKIITMFGNNDKTTLKHDAEIYSMIFVILGVICFVSYFMQGLFYGRAGEILTMRLRHLAFKAMLYQDIAWFDEKENSTGGLTTILAIDIAQIQGATGSRIGVLTQNATNMGLSVIISFIYGWEMTFLILSIAPVLAVTGMIETAAMTGFANKDKQELKHAGKIATEALENIRTIVSLTREKAFEQMYEEMLQTQHRNTSKKAQIIGSCYAFSHAFIYFAYAAGFRFGAYLIQAGRMTPEGMFIVFTAIAYGAMAIGETLVLAPEYSKAKSGAAHLFALLEKKPNIDSRSQEGKKPDTCEGNLEFREVSFFYPCRPDVFILRGLSLSIERGKTVAFVGSSGCGKSTSVQLLQRLYDPVQGQVLFDGVDAKELNVQWLRSQIAIVPQEPVLFNCSIAENIAYGDNSRVVPLDEIKEAANAANIHSFIEGLPEKYNTQVGLKGAQLSGGQKQRLAIARALLQKPKILLLDEATSALDNDSEKVVQHALDKARTGRTCLVVTHRLSAIQNADLIVVLHNGKIKEQGTHQELLRNRDIYFKLVNAQSVQ.

Residues 1 to 24 (MENSERAEEMQENYQRNGTAEEQP) are disordered. A glycan (N-linked (GlcNAc...) asparagine) is linked at Asn17. Residues 49–69 (ILGILASLVNGACLPLMPLVL) form a helical membrane-spanning segment. Residues 49–350 (ILGILASLVN…AAVPHFETFA (302 aa)) enclose the ABC transmembrane type-1 1 domain. 2 N-linked (GlcNAc...) asparagine glycosylation sites follow: Asn85 and Asn91. 5 consecutive transmembrane segments (helical) span residues 110-130 (YVGI…LWII), 181-201 (KIAL…VGLV), 203-223 (GWKL…SAAA), 294-314 (VYFF…SLIL), and 322-342 (IGTV…IGAA). N-linked (GlcNAc...) asparagine glycosylation is found at Asn371, Asn390, and Asn423. Residues 386–622 (VEFKNVSFNY…RGLYYSLVMS (237 aa)) form the ABC transporter 1 domain. An ATP-binding site is contributed by 421–428 (GLNGSGKS). 2 consecutive transmembrane segments (helical) span residues 693 to 713 (VLGT…SIIF) and 737 to 757 (MIFV…GLFY). Positions 693-980 (VLGTLASVLN…TLVLAPEYSK (288 aa)) constitute an ABC transmembrane type-1 2 domain. Asn789 and Asn819 each carry an N-linked (GlcNAc...) asparagine glycan. Residues 827 to 847 (VIISFIYGWEMTFLILSIAPV) traverse the membrane as a helical segment. An N-linked (GlcNAc...) asparagine glycan is attached at Asn910. 2 consecutive transmembrane segments (helical) span residues 917–937 (IIGS…AAGF) and 954–974 (MFIV…TLVL). Positions 1015 to 1253 (LEFREVSFFY…RDIYFKLVNA (239 aa)) constitute an ABC transporter 2 domain. Position 1050 to 1057 (1050 to 1057 (GSSGCGKS)) interacts with ATP. Residues Asn1104 and Asn1188 are each glycosylated (N-linked (GlcNAc...) asparagine).

Belongs to the ABC transporter superfamily. ABCB family. Multidrug resistance exporter (TC 3.A.1.201) subfamily. In terms of tissue distribution, expressed by CD133-expressing progenitor cells among epidermal melanocytes (at protein level). Widely expressed with specific expression in pigment cells. Highly expressed in several malignant tissues: highly expressed in clinical melanomas, with low expression in normal skin. In melanoma, marks malignant melanoma-initiating cells (MMIC), in which clinical virulence resides as a consequence of unlimited self-renewal capacity, resulting in inexorable tumor progression and metastasis. Also highly expressed in a number of leukemia cells. Expressed in basal limbal epithelium.

It localises to the cell membrane. The catalysed reaction is daunorubicin(in) + ATP + H2O = daunorubicin(out) + ADP + phosphate + H(+). Functionally, energy-dependent efflux transporter responsible for decreased drug accumulation in multidrug-resistant cells. Specifically present in limbal stem cells, where it plays a key role in corneal development and repair. In Homo sapiens (Human), this protein is ATP-binding cassette sub-family B member 5.